A 286-amino-acid polypeptide reads, in one-letter code: Simplagrin (286 aa).

A signal peptide spans 1-20 (MKKFCLIFLLLALTALHVKG). Residues 17–179 (HVKGSPIPDE…GSSSGGEESA (163 aa)) are disordered. 2 stretches are compositionally biased toward acidic residues: residues 24–69 (PDEE…DGQE) and 103–129 (VESG…TGGE). Asn-116 is a glycosylation site (N-linked (GlcNAc...) asparagine). The segment covering 166–177 (SNRAGSSSGGEE) has biased composition (low complexity).

The protein belongs to the aegyptin family. Monomeric in solution; likely has an elongated non-globular form. Interacts with human and rat collagens (via a RGQOGVMGF peptide, where O is hydroxyproline). In terms of processing, not glycosylated. In terms of tissue distribution, salivary gland.

Its subcellular location is the secreted. Inhibits host platelet aggregation induced by low concentrations of collagen via blocking the von Willebrand Factor (VWF) interaction with collagen. This is Simplagrin from Simulium nigrimanum (Black fly).